A 162-amino-acid polypeptide reads, in one-letter code: NADH-quinone oxidoreductase subunit I 2 (162 aa).

4Fe-4S ferredoxin-type domains are found at residues 52–82 (LRRY…IEAG) and 93–122 (ERYD…EGPN). Positions 62, 65, 68, 72, 102, 105, 108, and 112 each coordinate [4Fe-4S] cluster.

The protein belongs to the complex I 23 kDa subunit family. As to quaternary structure, NDH-1 is composed of 14 different subunits. Subunits NuoA, H, J, K, L, M, N constitute the membrane sector of the complex. [4Fe-4S] cluster serves as cofactor.

The protein localises to the cell inner membrane. It carries out the reaction a quinone + NADH + 5 H(+)(in) = a quinol + NAD(+) + 4 H(+)(out). Functionally, NDH-1 shuttles electrons from NADH, via FMN and iron-sulfur (Fe-S) centers, to quinones in the respiratory chain. The immediate electron acceptor for the enzyme in this species is believed to be ubiquinone. Couples the redox reaction to proton translocation (for every two electrons transferred, four hydrogen ions are translocated across the cytoplasmic membrane), and thus conserves the redox energy in a proton gradient. This chain is NADH-quinone oxidoreductase subunit I 2, found in Rhodopseudomonas palustris (strain BisA53).